The primary structure comprises 250 residues: Proteasome subunit alpha (250 aa).

This sequence belongs to the peptidase T1A family. The 20S proteasome core is composed of 14 alpha and 14 beta subunits that assemble into four stacked heptameric rings, resulting in a barrel-shaped structure. The two inner rings, each composed of seven catalytic beta subunits, are sandwiched by two outer rings, each composed of seven alpha subunits. The catalytic chamber with the active sites is on the inside of the barrel. Has a gated structure, the ends of the cylinder being occluded by the N-termini of the alpha-subunits. Is capped by the proteasome-associated ATPase, ARC.

It is found in the cytoplasm. The protein operates within protein degradation; proteasomal Pup-dependent pathway. The formation of the proteasomal ATPase ARC-20S proteasome complex, likely via the docking of the C-termini of ARC into the intersubunit pockets in the alpha-rings, may trigger opening of the gate for substrate entry. Interconversion between the open-gate and close-gate conformations leads to a dynamic regulation of the 20S proteasome proteolysis activity. In terms of biological role, component of the proteasome core, a large protease complex with broad specificity involved in protein degradation. The polypeptide is Proteasome subunit alpha (Mycobacterium sp. (strain JLS)).